The sequence spans 369 residues: Glutamate 5-kinase (369 aa).

Lysine 9 lines the ATP pocket. Residues serine 49, aspartate 136, and asparagine 148 each coordinate substrate. Residues 168-169 and 210-216 each bind ATP; these read TD and TGGMLTK. The region spanning 275–355 is the PUA domain; that stretch reads QGSIWVDKGA…KGVLIYRDDW (81 aa).

It belongs to the glutamate 5-kinase family.

The protein localises to the cytoplasm. It catalyses the reaction L-glutamate + ATP = L-glutamyl 5-phosphate + ADP. It functions in the pathway amino-acid biosynthesis; L-proline biosynthesis; L-glutamate 5-semialdehyde from L-glutamate: step 1/2. Catalyzes the transfer of a phosphate group to glutamate to form L-glutamate 5-phosphate. The polypeptide is Glutamate 5-kinase (Streptococcus pneumoniae (strain 70585)).